A 410-amino-acid polypeptide reads, in one-letter code: FBD-associated F-box protein At5g38590 (410 aa).

In terms of domain architecture, F-box spans 1–47; sequence MDKINGLPDDLLVKILSYVPTDIAVSTSILSKRWEFLWMWLPNLDYT. In terms of domain architecture, FBD spans 335–385; it reads GWNQPSSVPECLLSSLQIFKWPQYLGRPEDRDIAVYILKNARHLKKTTILA.

The sequence is that of FBD-associated F-box protein At5g38590 from Arabidopsis thaliana (Mouse-ear cress).